We begin with the raw amino-acid sequence, 445 residues long: Ubiquitin carboxyl-terminal hydrolase MINDY-3 (445 aa).

Cysteine 51 functions as the Nucleophile in the catalytic mechanism. At serine 125 the chain carries Phosphoserine. The active-site Proton acceptor is histidine 287.

Belongs to the MINDY deubiquitinase family. FAM188 subfamily. Interacts with COPS5. Widely expressed with high levels in heart, skeletal muscle, and kidney, and low levels in liver and brain. Also expressed in lung (at protein level).

The protein resides in the nucleus. The catalysed reaction is Thiol-dependent hydrolysis of ester, thioester, amide, peptide and isopeptide bonds formed by the C-terminal Gly of ubiquitin (a 76-residue protein attached to proteins as an intracellular targeting signal).. Hydrolase that can remove 'Lys-48'-linked conjugated ubiquitin from proteins. The polypeptide is Ubiquitin carboxyl-terminal hydrolase MINDY-3 (Homo sapiens (Human)).